The sequence spans 734 residues: MALRFPRFSQGLAQDPTTRRIWFGIATAHDFESHDDITEERLYQNIFASHFGQLAIIFLWTSGNLFHVAWQGNFETWVQDPLHVRPIAHAIWDPHFGQPAVEAFTRGGALGPVNIAYSGVYQWWYTIGLRTNEDLYTGALFLLFLSALSLIGGWLHLQPKWKPRVSWFKNAESRLNHHLSGLFGVSSLAWTGHLVHVAIPASRGENVRWNNFLNVLPHPQGLGPLFTGQWSLYAQNPDSSSHLFGTSQGSGTAILTLLGGFHPQTQSLWLTDMAHHHLAIAILFLIAGHMYRTNFGIGHSIKDLLEAHIPPGGRLGRGHKGLYDTINNSIHFQLGLALASLGVITSLVAQHMYSLPAYAFIAQDFTTQAALYTHHQYIAGFIMTGAFAHGAIFFIRDYNPEQNEDNVLARMLDHKEAIISHLSWASLFLGFHTLGLYVHNDVMLAFGTPEKQILIEPIFAQWIQSAHGKTSYGFDVLLSSTSGPAFNAGRSIWLPGWLNAINESSNSLFLTIGPGDFLVHHAIALGLHTTTLILVKGALDARGSKLMPDKKDFGYSFPCDGPGRGGTCDISAWDAFYLAVFWMLNTIGWVTFYWHWKHITLWQGNVSQFNESSTYLMGWLRDYLWLNSSQLINGYNPFGMNSLSVWAWMFLFGHLVWATGFMFLISWRGYWQELIETLAWAHERTPLANLIRWKDKPVALSIVQARLVGLAHFSVGYIFTYAAFLIASTSGKFG.

8 helical membrane-spanning segments follow: residues 46 to 69 (IFAS…FHVA), 135 to 158 (LYTG…LHLQ), 175 to 199 (LNHH…HVAI), 273 to 291 (MAHH…GHMY), 330 to 353 (IHFQ…QHMY), 369 to 395 (AALY…IFFI), 417 to 439 (AIIS…LYVH), and 517 to 535 (FLVH…LILV). [4Fe-4S] cluster is bound by residues Cys559 and Cys568. Transmembrane regions (helical) follow at residues 575–596 (AFYL…YWHW) and 643–665 (LSVW…MFLI). Residues His654, Met662, and Tyr670 each contribute to the chlorophyll a site. Trp671 provides a ligand contact to phylloquinone. Residues 707–727 (LVGLAHFSVGYIFTYAAFLIA) traverse the membrane as a helical segment.

The protein belongs to the PsaA/PsaB family. As to quaternary structure, the PsaA/B heterodimer binds the P700 chlorophyll special pair and subsequent electron acceptors. PSI consists of a core antenna complex that captures photons, and an electron transfer chain that converts photonic excitation into a charge separation. The eukaryotic PSI reaction center is composed of at least 11 subunits. Requires P700 is a chlorophyll a/chlorophyll a' dimer, A0 is one or more chlorophyll a, A1 is one or both phylloquinones and FX is a shared 4Fe-4S iron-sulfur center. as cofactor.

The protein localises to the plastid. Its subcellular location is the chloroplast thylakoid membrane. The catalysed reaction is reduced [plastocyanin] + hnu + oxidized [2Fe-2S]-[ferredoxin] = oxidized [plastocyanin] + reduced [2Fe-2S]-[ferredoxin]. In terms of biological role, psaA and PsaB bind P700, the primary electron donor of photosystem I (PSI), as well as the electron acceptors A0, A1 and FX. PSI is a plastocyanin-ferredoxin oxidoreductase, converting photonic excitation into a charge separation, which transfers an electron from the donor P700 chlorophyll pair to the spectroscopically characterized acceptors A0, A1, FX, FA and FB in turn. Oxidized P700 is reduced on the lumenal side of the thylakoid membrane by plastocyanin. The polypeptide is Photosystem I P700 chlorophyll a apoprotein A2 (Capsella bursa-pastoris (Shepherd's purse)).